A 649-amino-acid chain; its full sequence is Probable ADP-ribosylation factor GTPase-activating protein AGD14 (649 aa).

Residues 12-130 form the Arf-GAP domain; sequence EKIIRGLMKL…KYAGANDADK (119 aa). A C4-type zinc finger spans residues 27–50; it reads CINCNSLGPQYVCTTFWTFVCMAC. Disordered regions lie at residues 124–159, 209–279, 294–316, and 366–391; these read GANDADKPSKDSQDHVSSEDMTRRANSYHSYSQSPP, FSNE…VRSV, LGEAVSESRQNTGSQQGKTSNHV, and FTPANSFAGNLGQQPTSRPSELSAPK. Residues 127–146 are compositionally biased toward basic and acidic residues; it reads DADKPSKDSQDHVSSEDMTR. Residues 150-159 are compositionally biased toward low complexity; sequence SYHSYSQSPP. Composition is skewed to polar residues over residues 248 to 257, 269 to 279, 300 to 315, and 366 to 385; these read PQFQHSNAPP, RTTSSGSVRSV, ESRQNTGSQQGKTSNH, and FTPANSFAGNLGQQPTSRPS.

GTPase-activating protein (GAP) for ADP ribosylation factor (ARF). This chain is Probable ADP-ribosylation factor GTPase-activating protein AGD14 (AGD14), found in Arabidopsis thaliana (Mouse-ear cress).